Consider the following 273-residue polypeptide: Gap junction beta-5 protein (273 aa).

Residues 1–20 are Cytoplasmic-facing; that stretch reads MNWSIFEGLLSGVNKYSTAF. Residues 21 to 40 form a helical membrane-spanning segment; sequence GRIWLSLVFIFRVLVYLVTA. The Extracellular segment spans residues 41–75; that stretch reads ERVWSDDHKDFDCNTRQPGCSNVCFDEFFPVSHVR. Residues 76–98 form a helical membrane-spanning segment; the sequence is LWALQLILVTCPSLLVVMHVAYR. Residues 99 to 126 are Cytoplasmic-facing; that stretch reads EVQEKRHREAHGENSGRLYLNPGKKRGG. The helical transmembrane segment at 127-149 threads the bilayer; sequence LWWTYVCSLVFKASVDIAFLYVF. Over 150–187 the chain is Extracellular; sequence HSFYPKYILPPVVKCHADPCPNIVDCFISKPSEKNIFT. Residues 188–210 form a helical membrane-spanning segment; sequence LFMVATAAICILLNLVELIYLVS. Residues 211–273 lie on the Cytoplasmic side of the membrane; sequence KRCHECLAAR…PRDHVKKTIL (63 aa).

This sequence belongs to the connexin family. Beta-type (group I) subfamily. A connexon is composed of a hexamer of connexins.

The protein localises to the cell membrane. It localises to the cell junction. The protein resides in the gap junction. One gap junction consists of a cluster of closely packed pairs of transmembrane channels, the connexons, through which materials of low MW diffuse from one cell to a neighboring cell. This chain is Gap junction beta-5 protein (GJB5), found in Homo sapiens (Human).